The primary structure comprises 148 residues: MKVIFTQDVKGKGKKGEVKDVPVGYANNFLLKKNMAVEATPGNLRQLEQKNKAAEAERQQEIEDAKKLKEQLSEIEVEVSAKTGEGGKLFGSVSTKQITQALQQQHDIKIDKRKMDLPNGIHALGYTNVPVKLDKEVEGTIRVHTVEQ.

The protein belongs to the bacterial ribosomal protein bL9 family.

Functionally, binds to the 23S rRNA. This is Large ribosomal subunit protein bL9 from Staphylococcus saprophyticus subsp. saprophyticus (strain ATCC 15305 / DSM 20229 / NCIMB 8711 / NCTC 7292 / S-41).